The following is a 279-amino-acid chain: uncharacterized protein (279 aa).

One can recognise a Reverse transcriptase domain in the interval 1–87; sequence MRVNGRNLTN…DEYIYLGRQI (87 aa).

This is an uncharacterized protein from Caenorhabditis elegans.